A 248-amino-acid polypeptide reads, in one-letter code: MTRYKAIISYDGSGFYGYQVQPNTRTVQAEIEKALTKMHKGKTVRVTASGRTDTGVHAKGQVIHFDSELDITAEKFQKALQVMTPFDISFLTVEEVPDDFHARFGTVGKEYRYVVKRTKIFDPFSRNFALHYPYELDISKMKLASKRLIGEHDFTSFCSARTERDSKVRTLYSIDFYEEDDETLVIAFQGNGFLYNMVRILTGTLLDAGQGRISPDDISEALLARDRQKLISKTAPPQGLYLWRVDYE.

Asp53 acts as the Nucleophile in catalysis. A substrate-binding site is contributed by Tyr111.

It belongs to the tRNA pseudouridine synthase TruA family. In terms of assembly, homodimer.

It carries out the reaction uridine(38/39/40) in tRNA = pseudouridine(38/39/40) in tRNA. Formation of pseudouridine at positions 38, 39 and 40 in the anticodon stem and loop of transfer RNAs. In Listeria monocytogenes serovar 1/2a (strain ATCC BAA-679 / EGD-e), this protein is tRNA pseudouridine synthase A.